The primary structure comprises 407 residues: Serine/threonine transporter SstT (407 aa).

9 helical membrane-spanning segments follow: residues 14–34 (GSLVLQILVGIIAGVILATVS), 48–68 (FVGALKAIAPILVFILVAASI), 82–102 (IVILYLFGTFSAAVTAVLMSF), 141–161 (AVITGNYIGILAWGVGLGLAL), 192–212 (IGIFGLVSSTFATTGFSAIAG), 218–238 (LVLLGAMAIMALIINPAIVFF), 290–310 (IPLGATINMGGAAITITILTL), 316–336 (MGIQVDILTAILLSVVAGVSA), and 363–383 (VAMQVVAVGFIIGVIQDSAET).

Belongs to the dicarboxylate/amino acid:cation symporter (DAACS) (TC 2.A.23) family.

The protein resides in the cell inner membrane. The enzyme catalyses L-serine(in) + Na(+)(in) = L-serine(out) + Na(+)(out). It carries out the reaction L-threonine(in) + Na(+)(in) = L-threonine(out) + Na(+)(out). Involved in the import of serine and threonine into the cell, with the concomitant import of sodium (symport system). The sequence is that of Serine/threonine transporter SstT from Shewanella pealeana (strain ATCC 700345 / ANG-SQ1).